Here is a 431-residue protein sequence, read N- to C-terminus: Divalent metal cation transporter MntH (431 aa).

12 helical membrane passes run Trp-30 to Gly-50, Gly-63 to Leu-83, Pro-106 to Glu-126, Leu-137 to Leu-159, Ile-169 to Ser-189, Tyr-209 to Leu-229, Val-257 to Ala-277, Val-287 to Ser-307, Val-309 to Gly-329, Ile-341 to Gly-361, Ala-367 to Leu-387, and Val-405 to Phe-425.

The protein belongs to the NRAMP family.

The protein localises to the cell inner membrane. Functionally, h(+)-stimulated, divalent metal cation uptake system. The polypeptide is Divalent metal cation transporter MntH (Chromohalobacter salexigens (strain ATCC BAA-138 / DSM 3043 / CIP 106854 / NCIMB 13768 / 1H11)).